A 284-amino-acid polypeptide reads, in one-letter code: Tropomyosin (284 aa).

A coiled-coil region spans residues M1–E273. Residues S110–L130 show a composition bias toward basic and acidic residues. Residues S110 to N134 form a disordered region.

It belongs to the tropomyosin family. Homodimer.

Tropomyosin, in association with the troponin complex, plays a central role in the calcium dependent regulation of muscle contraction. In Perna viridis (Asian green mussel), this protein is Tropomyosin.